The chain runs to 158 residues: ATP synthase subunit b', chloroplastic (158 aa).

A helical membrane pass occupies residues 21 to 41 (GTLPLMALQFLILMLLLNTIF).

Belongs to the ATPase B chain family. In terms of assembly, F-type ATPases have 2 components, F(1) - the catalytic core - and F(0) - the membrane proton channel. F(1) has five subunits: alpha(3), beta(3), gamma(1), delta(1), epsilon(1). F(0) has four main subunits: a(1), b(1), b'(1) and c(10-14). The alpha and beta chains form an alternating ring which encloses part of the gamma chain. F(1) is attached to F(0) by a central stalk formed by the gamma and epsilon chains, while a peripheral stalk is formed by the delta, b and b' chains.

It localises to the plastid. It is found in the chloroplast thylakoid membrane. Functionally, f(1)F(0) ATP synthase produces ATP from ADP in the presence of a proton or sodium gradient. F-type ATPases consist of two structural domains, F(1) containing the extramembraneous catalytic core and F(0) containing the membrane proton channel, linked together by a central stalk and a peripheral stalk. During catalysis, ATP synthesis in the catalytic domain of F(1) is coupled via a rotary mechanism of the central stalk subunits to proton translocation. Its function is as follows. Component of the F(0) channel, it forms part of the peripheral stalk, linking F(1) to F(0). The b'-subunit is a diverged and duplicated form of b found in plants and photosynthetic bacteria. The sequence is that of ATP synthase subunit b', chloroplastic from Porphyra purpurea (Red seaweed).